The following is a 129-amino-acid chain: Replication initiation control protein YabA (129 aa).

The tract at residues 52-71 is disordered; sequence LSLTDEATPEPKAETEAEHG. The segment covering 60–71 has biased composition (basic and acidic residues); it reads PEPKAETEAEHG. Residues His103, Cys105, Cys119, and Cys122 each contribute to the Zn(2+) site.

This sequence belongs to the YabA family. In terms of assembly, homotetramer. Interacts with both DnaA and DnaN, acting as a bridge between these two proteins. Requires Zn(2+) as cofactor.

The protein resides in the cytoplasm. Its subcellular location is the nucleoid. In terms of biological role, involved in control of chromosome replication initiation. Inhibits the cooperative binding of DnaA to the oriC region, thus negatively regulating initiation of chromosome replication. Inhibits the ability of DnaA-ATP to form a helix on DNA; does not disassemble preformed DnaA-DNA helices. Decreases the residence time of DnaA on the chromosome at its binding sites (oriC, replication forks and promoter-binding sites). Tethers DnaA to the replication machinery via the DNA polymerase beta sliding clamp subunit (dnaN). Associates with oriC and other DnaA targets on the chromosome in a DnaA-dependent manner. The chain is Replication initiation control protein YabA from Listeria monocytogenes serotype 4a (strain HCC23).